The primary structure comprises 67 residues: Large ribosomal subunit protein bL32 (67 aa).

Positions 1 to 19 (MAVPKRKMSRSNTRARRSQ) are enriched in basic residues. A disordered region spans residues 1-21 (MAVPKRKMSRSNTRARRSQWK).

This sequence belongs to the bacterial ribosomal protein bL32 family.

This chain is Large ribosomal subunit protein bL32, found in Clavibacter michiganensis subsp. michiganensis (strain NCPPB 382).